We begin with the raw amino-acid sequence, 727 residues long: Phosphoribosylformylglycinamidine synthase subunit PurL (727 aa).

The active site involves H47. Positions 50 and 82 each coordinate ATP. E84 provides a ligand contact to Mg(2+). Substrate is bound by residues 85-88 and R107; that span reads SHNH. H86 serves as the catalytic Proton acceptor. D108 serves as a coordination point for Mg(2+). Position 229 (Q229) interacts with substrate. D257 is a Mg(2+) binding site. 301 to 303 serves as a coordination point for substrate; the sequence is ESQ. Residues D486 and G523 each coordinate ATP. Position 524 (N524) interacts with Mg(2+). S526 lines the substrate pocket.

The protein belongs to the FGAMS family. As to quaternary structure, monomer. Part of the FGAM synthase complex composed of 1 PurL, 1 PurQ and 2 PurS subunits.

It is found in the cytoplasm. The enzyme catalyses N(2)-formyl-N(1)-(5-phospho-beta-D-ribosyl)glycinamide + L-glutamine + ATP + H2O = 2-formamido-N(1)-(5-O-phospho-beta-D-ribosyl)acetamidine + L-glutamate + ADP + phosphate + H(+). It functions in the pathway purine metabolism; IMP biosynthesis via de novo pathway; 5-amino-1-(5-phospho-D-ribosyl)imidazole from N(2)-formyl-N(1)-(5-phospho-D-ribosyl)glycinamide: step 1/2. Part of the phosphoribosylformylglycinamidine synthase complex involved in the purines biosynthetic pathway. Catalyzes the ATP-dependent conversion of formylglycinamide ribonucleotide (FGAR) and glutamine to yield formylglycinamidine ribonucleotide (FGAM) and glutamate. The FGAM synthase complex is composed of three subunits. PurQ produces an ammonia molecule by converting glutamine to glutamate. PurL transfers the ammonia molecule to FGAR to form FGAM in an ATP-dependent manner. PurS interacts with PurQ and PurL and is thought to assist in the transfer of the ammonia molecule from PurQ to PurL. In Petrotoga mobilis (strain DSM 10674 / SJ95), this protein is Phosphoribosylformylglycinamidine synthase subunit PurL.